The following is an 84-amino-acid chain: Mu-conotoxin-like Cal 12.2a (84 aa).

A signal peptide spans 1–19 (MKLTCVLVVLLLVLPFGDL). The propeptide occupies 20–42 (ITTSNTEDNKRGATPWQNSLKAR). Intrachain disulfides connect Cys45–Cys57, Cys52–Cys65, Cys59–Cys70, and Cys64–Cys76. Position 48 is a 4-hydroxyproline (Pro48). Trp72 bears the 6'-bromotryptophan mark. Pro77 carries the post-translational modification 4-hydroxyproline. Position 81 is a 6'-bromotryptophan (Trp81).

Belongs to the conotoxin O1 superfamily. As to expression, expressed by the venom duct.

Its subcellular location is the secreted. Its function is as follows. Mu-conotoxins block voltage-gated sodium channels. This toxin reversibly blocks voltage-gated sodium channel in cephalopods, with no alteration in the voltage dependence of sodium conductance or on the kinetics of inactivation. The polypeptide is Mu-conotoxin-like Cal 12.2a (Californiconus californicus (California cone)).